A 113-amino-acid chain; its full sequence is Integration host factor subunit alpha (113 aa).

2 disordered regions span residues 59-80 (GNFQ…GETI) and 94-113 (QKLK…ASAE). A compositionally biased stretch (pro residues) spans 104 to 113 (NSPPDPASAE).

It belongs to the bacterial histone-like protein family. Heterodimer of an alpha and a beta chain.

This protein is one of the two subunits of integration host factor, a specific DNA-binding protein that functions in genetic recombination as well as in transcriptional and translational control. The chain is Integration host factor subunit alpha from Bordetella pertussis (strain Tohama I / ATCC BAA-589 / NCTC 13251).